We begin with the raw amino-acid sequence, 252 residues long: Type II secretion system protein N (252 aa).

Residues 1-4 (MKQK) lie on the Cytoplasmic side of the membrane. A helical transmembrane segment spans residues 5-25 (VLIAALFLVAYLGFLLVKLPA). Over 26-252 (TLVVRHLPLP…RFPLRYQGRI (227 aa)) the chain is Periplasmic.

It belongs to the GSP N family.

It localises to the cell inner membrane. Functionally, involved in a type II secretion system (T2SS, formerly general secretion pathway, GSP) for the export of proteins. This Aeromonas hydrophila protein is Type II secretion system protein N (exeN).